The primary structure comprises 404 residues: Argininosuccinate synthase (404 aa).

Residues 13 to 21 and Ala41 contribute to the ATP site; that span reads AYSGGLDTS. L-citrulline contacts are provided by Tyr93 and Ser98. Position 123 (Gly123) interacts with ATP. 3 residues coordinate L-aspartate: Thr125, Asn129, and Asp130. Asn129 provides a ligand contact to L-citrulline. L-citrulline contacts are provided by Arg133, Ser182, Ser191, Glu267, and Tyr279.

The protein belongs to the argininosuccinate synthase family. Type 1 subfamily. In terms of assembly, homotetramer.

It is found in the cytoplasm. It catalyses the reaction L-citrulline + L-aspartate + ATP = 2-(N(omega)-L-arginino)succinate + AMP + diphosphate + H(+). It functions in the pathway amino-acid biosynthesis; L-arginine biosynthesis; L-arginine from L-ornithine and carbamoyl phosphate: step 2/3. The protein is Argininosuccinate synthase of Moritella profunda.